Here is a 204-residue protein sequence, read N- to C-terminus: Pectinesterase inhibitor 9 (204 aa).

Positions 1–23 are cleaved as a signal peptide; that stretch reads MELKNTIFLVILLSITILQSSSA. N26 is a glycosylation site (N-linked (GlcNAc...) asparagine). Intrachain disulfides connect C38-C47 and C106-C157.

It belongs to the PMEI family. As to quaternary structure, binds reversibly to PME3 to inhibit its activity; the stability of the PME3-PMEI9 complex and the inhibition of the pectin methylesterase (PME) activity is pH-dependent, based on protonation status of amino-acids at the complex interface. As to expression, highly expressed in roots and etiolated hypocotyls. Expressed in seedlings, leaves, stems, siliques, floral buds and mature seeds.

It localises to the secreted. The protein localises to the extracellular space. The protein resides in the apoplast. Its function is as follows. Pectin methylesterase (PME) inhibitor that probably targets root-expressed PME and PME3 in a moderate pH-dependent manner, mainly in slightly acidic conditions (pH 6.3 and 5.0) and to some extent at pH 7.5; this processus relies on changes in the protonation of amino acids involved in intermolecular and intramolecular interactions. Regulates de-methylesterification of pectins in roots and affects root growth. The polypeptide is Pectinesterase inhibitor 9 (Arabidopsis thaliana (Mouse-ear cress)).